The chain runs to 310 residues: Glutaminase 1 (310 aa).

Ser66, Asn117, Glu161, Asn168, Tyr192, Tyr244, and Val262 together coordinate substrate. N6-acetyllysine is present on Lys294.

This sequence belongs to the glutaminase family. In terms of assembly, homotetramer.

It carries out the reaction L-glutamine + H2O = L-glutamate + NH4(+). This Escherichia coli (strain K12) protein is Glutaminase 1.